Reading from the N-terminus, the 349-residue chain is Phospho-N-acetylmuramoyl-pentapeptide-transferase (349 aa).

Helical transmembrane passes span 13 to 33 (LFFSLALTGMTTLVLTVSLGV), 69 to 89 (GGGVLLFISLIASLLVWLPWG), 91 to 111 (FSTWFFIILLTCYAGLGWYDD), 129 to 149 (FMVQIAIAAFTLIALPYIYGS), 165 to 185 (LSLPFWLGKVFCLGLALVAII), 197 to 217 (LDGLAAGTMSFAALGFIFVAL), 228 to 248 (VAYVLAALVGACIGFLWYNGF), 252 to 272 (LFMGDTGSLLLGGLLGSCAVM), 278 to 298 (ILVVIGGVFVAEAGSVILQVL), and 327 to 347 (IVMRFWIFSFVCAGLGIAAVL).

It belongs to the glycosyltransferase 4 family. MraY subfamily. Mg(2+) is required as a cofactor.

The protein localises to the cell inner membrane. It catalyses the reaction UDP-N-acetyl-alpha-D-muramoyl-L-alanyl-gamma-D-glutamyl-meso-2,6-diaminopimeloyl-D-alanyl-D-alanine + di-trans,octa-cis-undecaprenyl phosphate = di-trans,octa-cis-undecaprenyl diphospho-N-acetyl-alpha-D-muramoyl-L-alanyl-D-glutamyl-meso-2,6-diaminopimeloyl-D-alanyl-D-alanine + UMP. It participates in cell wall biogenesis; peptidoglycan biosynthesis. Functionally, catalyzes the initial step of the lipid cycle reactions in the biosynthesis of the cell wall peptidoglycan: transfers peptidoglycan precursor phospho-MurNAc-pentapeptide from UDP-MurNAc-pentapeptide onto the lipid carrier undecaprenyl phosphate, yielding undecaprenyl-pyrophosphoryl-MurNAc-pentapeptide, known as lipid I. In Chlamydia pneumoniae (Chlamydophila pneumoniae), this protein is Phospho-N-acetylmuramoyl-pentapeptide-transferase.